The primary structure comprises 427 residues: Gamma-glutamyl phosphate reductase (427 aa).

Belongs to the gamma-glutamyl phosphate reductase family.

The protein localises to the cytoplasm. The catalysed reaction is L-glutamate 5-semialdehyde + phosphate + NADP(+) = L-glutamyl 5-phosphate + NADPH + H(+). The protein operates within amino-acid biosynthesis; L-proline biosynthesis; L-glutamate 5-semialdehyde from L-glutamate: step 2/2. Its function is as follows. Catalyzes the NADPH-dependent reduction of L-glutamate 5-phosphate into L-glutamate 5-semialdehyde and phosphate. The product spontaneously undergoes cyclization to form 1-pyrroline-5-carboxylate. The chain is Gamma-glutamyl phosphate reductase from Rhizobium etli (strain CIAT 652).